A 214-amino-acid chain; its full sequence is MTDTLPTVSRRGLMLVMSSPSGAGKTTISRALLERDPAIGMSVSATTRAPRPGEVDGKDYHFVTVEKFHEMVEKREFLEHARVFDNFYGTPRGPVDEILRSGRDVLFDIDWQGTQQMAQNARADLVSVFVLPPSVEELERRLRGRAQDSDEVVRKRMAKAGDEMSHWPEYDYIVVNIDLDKSIAAVQAILAAERLKRERQVGLPDFVTQLRGGE.

Residues 12–191 (GLMLVMSSPS…SIAAVQAILA (180 aa)) enclose the Guanylate kinase-like domain. 19 to 26 (SPSGAGKT) provides a ligand contact to ATP.

This sequence belongs to the guanylate kinase family.

It localises to the cytoplasm. It carries out the reaction GMP + ATP = GDP + ADP. In terms of biological role, essential for recycling GMP and indirectly, cGMP. The polypeptide is Guanylate kinase (Paramagnetospirillum magneticum (strain ATCC 700264 / AMB-1) (Magnetospirillum magneticum)).